We begin with the raw amino-acid sequence, 774 residues long: DNA ligase (774 aa).

Residues Asp36–Asp40, Ser85–Leu86, and Glu161 contribute to the NAD(+) site. Lys163 serves as the catalytic N6-AMP-lysine intermediate. NAD(+)-binding residues include Arg184, Glu221, Lys341, and Lys365. Zn(2+) contacts are provided by Cys459, Cys462, Cys477, and Cys482. Positions Val693–Ile774 constitute a BRCT domain.

Belongs to the NAD-dependent DNA ligase family. LigA subfamily. It depends on Mg(2+) as a cofactor. Mn(2+) serves as cofactor.

The enzyme catalyses NAD(+) + (deoxyribonucleotide)n-3'-hydroxyl + 5'-phospho-(deoxyribonucleotide)m = (deoxyribonucleotide)n+m + AMP + beta-nicotinamide D-nucleotide.. DNA ligase that catalyzes the formation of phosphodiester linkages between 5'-phosphoryl and 3'-hydroxyl groups in double-stranded DNA using NAD as a coenzyme and as the energy source for the reaction. It is essential for DNA replication and repair of damaged DNA. The sequence is that of DNA ligase from Trichodesmium erythraeum (strain IMS101).